Consider the following 56-residue polypeptide: MFTVFLLVVLATTVVSFTSDRASDSRKDAASGLIALTIKGCCSDPRCNMNNPDYCG.

The N-terminal stretch at 1–16 (MFTVFLLVVLATTVVS) is a signal peptide. Residues 17–39 (FTSDRASDSRKDAASGLIALTIK) constitute a propeptide that is removed on maturation. 2 cysteine pairs are disulfide-bonded: C41–C47 and C42–C55. The ser-Xaa-Pro motif, crucial for potent interaction with nAChR stretch occupies residues 43 to 45 (SDP). Position 54 is a sulfotyrosine (Y54). Residue C55 is modified to Cysteine amide.

This sequence belongs to the conotoxin A superfamily. Post-translationally, both tyrosine sulfation and C-terminal amidation are important for activity and structure stability. Expressed by the venom duct.

The protein localises to the secreted. Alpha-conotoxins act on postsynaptic membranes, they bind to the nicotinic acetylcholine receptors (nAChR) and thus inhibit them. This native peptide blocks mammalian nicotinic acetylcholine receptors composed of alpha-3-beta-2/CHRNA3-CHRNB2 and alpha-3-beta-4/CHRNA3-CHRNB4 subunits. The sequence is that of Alpha-conotoxin EpI from Conus episcopatus (Bishop's cone).